A 156-amino-acid polypeptide reads, in one-letter code: Ribosomal RNA large subunit methyltransferase H (156 aa).

S-adenosyl-L-methionine contacts are provided by residues Leu-73, Gly-104, and 123-128 (LSALTL).

The protein belongs to the RNA methyltransferase RlmH family. Homodimer.

Its subcellular location is the cytoplasm. It carries out the reaction pseudouridine(1915) in 23S rRNA + S-adenosyl-L-methionine = N(3)-methylpseudouridine(1915) in 23S rRNA + S-adenosyl-L-homocysteine + H(+). Specifically methylates the pseudouridine at position 1915 (m3Psi1915) in 23S rRNA. The polypeptide is Ribosomal RNA large subunit methyltransferase H (Shewanella oneidensis (strain ATCC 700550 / JCM 31522 / CIP 106686 / LMG 19005 / NCIMB 14063 / MR-1)).